The primary structure comprises 417 residues: E3 ubiquitin-protein ligase RNF135 (417 aa).

An RING-type zinc finger spans residues 21-67 (CIICQGLLDQPTTLPCGHSFCLRCLHDLWVSKRGAVDGCPWACPICR). 2 disordered regions span residues 95–118 (EVEA…TVQK) and 143–173 (TQRP…SLDS). Coiled coils occupy residues 121 to 145 (TNVI…QTQR) and 180 to 204 (SISQ…QGSV). Polar residues predominate over residues 143-164 (TQRPNLGSGQDNAQGTPPTDSS). Residues 225–417 (PDQRRPAPRK…NYLEIKQLNT (193 aa)) form the B30.2/SPRY domain.

As to quaternary structure, homodimer. Interacts (homodimer) with RIGI (double-stranded RNA-bound oligomeric form); involved in both RIGI ubiquitination, oligomerization into filaments associated with viral RNAs and the bridging of these filaments. Interacts with UBE2D3 and UBE2N; E2 ubiquitin ligases involved in RNF135-mediated ubiquitination of RIGI and activation of the RIG-I signaling pathway. Interacts with PCBP2. Ubiquitously expressed.

It localises to the cytoplasm. The protein localises to the stress granule. It catalyses the reaction S-ubiquitinyl-[E2 ubiquitin-conjugating enzyme]-L-cysteine + [acceptor protein]-L-lysine = [E2 ubiquitin-conjugating enzyme]-L-cysteine + N(6)-ubiquitinyl-[acceptor protein]-L-lysine.. Its pathway is protein modification; protein ubiquitination. Its function is as follows. E2-dependent E3 ubiquitin-protein ligase that functions as a RIGI coreceptor in the sensing of viral RNAs in cell cytoplasm and the activation of the antiviral innate immune response. Together with the UBE2D3, UBE2N and UB2V1 E2 ligases, catalyzes the 'Lys-63'-linked polyubiquitination of RIGI oligomerized on viral RNAs, an essential step in the activation of the RIG-I signaling pathway. Through a ubiquitin-independent parallel mechanism, which consists in bridging RIGI filaments forming on longer viral RNAs, further activates the RIG-I signaling pathway. This second mechanism that synergizes with the ubiquitin-dependent one would thereby allow an RNA length-dependent regulation of the RIG-I signaling pathway. Associated with the E2 ligase UBE2N, also constitutively synthesizes unanchored 'Lys-63'-linked polyubiquitin chains that may also activate the RIG-I signaling pathway. It is not involved in the innate immune response against DNA viruses. This Mus musculus (Mouse) protein is E3 ubiquitin-protein ligase RNF135.